The sequence spans 346 residues: Very-long-chain 3-oxoacyl-CoA reductase (346 aa).

A helical membrane pass occupies residues 23–43; it reads AAWIVFGLGISKMVFLTLNFS. Val69, Asp123, Asn150, Tyr222, Lys226, Val255, and Ser257 together coordinate NADP(+). Tyr222 (proton donor) is an active-site residue. Lys226 acts as the Lowers pKa of active site Tyr in catalysis.

It belongs to the short-chain dehydrogenases/reductases (SDR) family.

It localises to the endoplasmic reticulum membrane. The enzyme catalyses a very-long-chain (3R)-3-hydroxyacyl-CoA + NADP(+) = a very-long-chain 3-oxoacyl-CoA + NADPH + H(+). Its pathway is lipid metabolism; fatty acid biosynthesis. Its function is as follows. Component of the microsomal membrane bound fatty acid elongation system, which produces the 26-carbon very long-chain fatty acids (VLCFA) from palmitate. Catalyzes the reduction of the 3-ketoacyl-CoA intermediate that is formed in each cycle of fatty acid elongation. VLCFAs serve as precursors for ceramide and sphingolipids. The protein is Very-long-chain 3-oxoacyl-CoA reductase of Kluyveromyces lactis (strain ATCC 8585 / CBS 2359 / DSM 70799 / NBRC 1267 / NRRL Y-1140 / WM37) (Yeast).